The sequence spans 334 residues: Protein-methionine-sulfoxide reductase catalytic subunit MsrP (334 aa).

The segment at residues 1–44 is a signal peptide (tat-type signal); it reads MKKNQFLKESDVTAESVFFMKRRQVLKALGISAAALSLPHAAHA. Residues Asn88, 91 to 92, Cys146, Thr181, Asn233, Arg238, and 249 to 251 each bind Mo-molybdopterin; these read YE and GIK.

This sequence belongs to the MsrP family. As to quaternary structure, heterodimer of a catalytic subunit (MsrP) and a heme-binding subunit (MsrQ). It depends on Mo-molybdopterin as a cofactor. Predicted to be exported by the Tat system. The position of the signal peptide cleavage has not been experimentally proven.

It is found in the periplasm. The catalysed reaction is L-methionyl-[protein] + a quinone + H2O = L-methionyl-(S)-S-oxide-[protein] + a quinol. It catalyses the reaction L-methionyl-[protein] + a quinone + H2O = L-methionyl-(R)-S-oxide-[protein] + a quinol. Its function is as follows. Part of the MsrPQ system that repairs oxidized periplasmic proteins containing methionine sulfoxide residues (Met-O), using respiratory chain electrons. Thus protects these proteins from oxidative-stress damage caused by reactive species of oxygen and chlorine generated by the host defense mechanisms. MsrPQ is essential for the maintenance of envelope integrity under bleach stress, rescuing a wide series of structurally unrelated periplasmic proteins from methionine oxidation, including the primary periplasmic chaperone SurA and the lipoprotein Pal. The catalytic subunit MsrP is non-stereospecific, being able to reduce both (R-) and (S-) diastereoisomers of methionine sulfoxide. The sequence is that of Protein-methionine-sulfoxide reductase catalytic subunit MsrP from Shigella sonnei (strain Ss046).